The primary structure comprises 127 residues: Glycine cleavage system H protein (127 aa).

A Lipoyl-binding domain is found at 22 to 103 (EAYIGITDFA…AFANWIIKVE (82 aa)). Lys63 carries the post-translational modification N6-lipoyllysine.

The protein belongs to the GcvH family. The glycine cleavage system is composed of four proteins: P, T, L and H. Requires (R)-lipoate as cofactor.

In terms of biological role, the glycine cleavage system catalyzes the degradation of glycine. The H protein shuttles the methylamine group of glycine from the P protein to the T protein. In Alkaliphilus oremlandii (strain OhILAs) (Clostridium oremlandii (strain OhILAs)), this protein is Glycine cleavage system H protein.